We begin with the raw amino-acid sequence, 459 residues long: Cysteine--tRNA ligase (459 aa).

Cys31 serves as a coordination point for Zn(2+). The 'HIGH' region motif lies at 33–43 (PTVYYNPHIGN). Residues Cys216, His241, and Glu245 each contribute to the Zn(2+) site. Positions 274 to 278 (KMSKS) match the 'KMSKS' region motif. Lys277 contributes to the ATP binding site.

This sequence belongs to the class-I aminoacyl-tRNA synthetase family. In terms of assembly, monomer. Zn(2+) is required as a cofactor.

It is found in the cytoplasm. The catalysed reaction is tRNA(Cys) + L-cysteine + ATP = L-cysteinyl-tRNA(Cys) + AMP + diphosphate. The sequence is that of Cysteine--tRNA ligase from Rickettsia rickettsii (strain Iowa).